A 95-amino-acid chain; its full sequence is Co-chaperonin GroES (95 aa).

The protein belongs to the GroES chaperonin family. Heptamer of 7 subunits arranged in a ring. Interacts with the chaperonin GroEL.

It is found in the cytoplasm. Functionally, together with the chaperonin GroEL, plays an essential role in assisting protein folding. The GroEL-GroES system forms a nano-cage that allows encapsulation of the non-native substrate proteins and provides a physical environment optimized to promote and accelerate protein folding. GroES binds to the apical surface of the GroEL ring, thereby capping the opening of the GroEL channel. In Oleidesulfovibrio alaskensis (strain ATCC BAA-1058 / DSM 17464 / G20) (Desulfovibrio alaskensis), this protein is Co-chaperonin GroES.